A 474-amino-acid chain; its full sequence is Trichothecene 3-O-acetyltransferase (474 aa).

The protein belongs to the trichothecene 3-O-acetyltransferase family.

Trichothecene 3-O-acetyltransferase involved in self-protection against trichothecenes, mycotoxins acting as eukaryotic protein synthesis inhibitors. Its existence is surprising in a non-trichothecene producer organism which needs no self-protection again endogenic trichothecenes. The persistence of this non-essential gene may be due to a selective advantage that it may confer, like a resistance to exogenic trichothecenes. The sequence is that of Trichothecene 3-O-acetyltransferase (AYT1) from Saccharomyces cerevisiae (strain ATCC 204508 / S288c) (Baker's yeast).